The sequence spans 295 residues: Threonine/homoserine exporter RhtA (295 aa).

Over 1–9 the chain is Cytoplasmic; that stretch reads MPGSLRKMP. A helical transmembrane segment spans residues 10 to 30; the sequence is VWLPIVILLVAMASIQGGASL. Residues 30–135 enclose the EamA 1 domain; the sequence is LAKSLFPLVG…VLAVLGLWFL (106 aa). Residues 31–38 are Periplasmic-facing; the sequence is AKSLFPLV. The helical transmembrane segment at 39–59 threads the bilayer; the sequence is GAPGVTALRLALGTLILIAFF. At 60 to 71 the chain is on the cytoplasmic side; that stretch reads KPWRLRFAKEQR. A helical membrane pass occupies residues 72–92; sequence LPLLFYGVSLGGMNYLFYLSI. Glutamine 93 is a topological domain (periplasmic). Residues 94–114 traverse the membrane as a helical segment; it reads TVPLGIAVALEFTGPLAVALF. At 115 to 118 the chain is on the cytoplasmic side; that stretch reads SSRR. A helical transmembrane segment spans residues 119-139; the sequence is PVDFVWVVLAVLGLWFLLPLG. Topologically, residues 140-146 are periplasmic; that stretch reads QDVSHVD. A helical membrane pass occupies residues 147-167; the sequence is LTGCALALGAGACWAIYILSG. An EamA 2 domain is found at 159-278; that stretch reads CWAIYILSGQ…LGAIIAASMG (120 aa). Over 168 to 175 the chain is Cytoplasmic; it reads QRAGAEHG. The chain crosses the membrane as a helical span at residues 176 to 196; that stretch reads PATVAIGSLIAALIFVPIGAL. At 197–200 the chain is on the periplasmic side; that stretch reads QAGE. A helical transmembrane segment spans residues 201–221; sequence ALWHWSVIPLGLAVAILSTAL. Topologically, residues 222–237 are cytoplasmic; sequence PYSLEMIALTRLPTRT. A helical transmembrane segment spans residues 238 to 258; sequence FGTLMSMEPALAAVSGMIFLG. Residues 259 to 262 are Periplasmic-facing; sequence ETLT. A helical transmembrane segment spans residues 263-283; that stretch reads PIQLLALGAIIAASMGSTLTV. At 284–295 the chain is on the cytoplasmic side; sequence RKESKIKELDIN.

The protein belongs to the drug/metabolite transporter (DMT) superfamily. 10 TMS drug/metabolite exporter (DME) (TC 2.A.7.3) family.

The protein localises to the cell inner membrane. Its function is as follows. Involved in the efflux of threonine and homoserine. This chain is Threonine/homoserine exporter RhtA (rhtA), found in Escherichia coli O157:H7.